Consider the following 1746-residue polypeptide: Inactive tyrosine-protein kinase PEAK1 (1746 aa).

Positions 44–66 (KTNANHSNNHRIRNTGNFRPPVA) are disordered. Ser-281 bears the Phosphoserine mark. 2 disordered regions span residues 334–411 (QSMV…KVPE) and 489–517 (LEGPVNSPKTKSSSSTPNSPVTSSSLTPG). Residues 338-349 (SSDSTSPDSSLT) show a composition bias toward low complexity. Polar residues predominate over residues 355–364 (ETASSLSQKI). Residues 492-513 (PVNSPKTKSSSSTPNSPVTSSS) show a composition bias toward low complexity. Ser-540, Ser-572, and Ser-587 each carry phosphoserine. The tract at residues 551 to 577 (ITSGTGPNVPPRKNCHKSAPTSPTATN) is disordered. Phosphotyrosine is present on residues Tyr-635 and Tyr-641. Phosphoserine is present on Ser-648. Tyr-665 is subject to Phosphotyrosine. 5 disordered regions span residues 671 to 700 (ESKVPDNTTSKTTDCLQTKGFSNSTEHKRG), 713 to 764 (LNRG…EKAS), 802 to 920 (DADV…AADA), 1052 to 1102 (VTED…DPNP), and 1138 to 1158 (GKTDQEAPNASQPTPPPLPKK). The span at 675 to 694 (PDNTTSKTTDCLQTKGFSNS) shows a compositional bias: polar residues. Residues 718 to 730 (SSPQRSYSSSHSS) are compositionally biased toward low complexity. 2 stretches are compositionally biased toward polar residues: residues 748 to 758 (TQESQMVGSSS) and 820 to 841 (LFTSQPSGEAEAPQTTDSPTTK). Phosphoserine occurs at positions 826 and 854. Residues 864-874 (SEPPAPFPPPR) are compositionally biased toward pro residues. Residues 889-902 (HFTNWTKPTSPTRS) are compositionally biased toward polar residues. The residue at position 898 (Ser-898) is a Phosphoserine. Basic and acidic residues-rich tracts occupy residues 903–920 (TEAESVLHSEGSRRAADA), 1052–1062 (VTEDFSPRDPR), and 1084–1094 (ELEREDGKEDI). Thr-1151 carries the phosphothreonine modification. At Tyr-1188 the chain carries Phosphotyrosine. The interval 1285–1311 (EVVGKIRSLHTDALKKLAVKCEDLFMA) is required for homodimerization. The Protein kinase domain maps to 1313–1675 (QKDQLRFGVD…LLWGPREDLF (363 aa)). Residue Ser-1374 is modified to Phosphoserine. The interval 1402 to 1456 (LLPWEDPDDPEKDEDDMEETEEDAKGETDGKNPKPCSEAASSQKENQGVMSKKQR) is disordered. The span at 1406 to 1423 (EDPDDPEKDEDDMEETEE) shows a compositional bias: acidic residues. The span at 1424-1433 (DAKGETDGKN) shows a compositional bias: basic and acidic residues. A compositionally biased stretch (polar residues) spans 1440-1450 (AASSQKENQGV). The interval 1670-1743 (PREDLFQTFT…DSLSCIVKIL (74 aa)) is required for homodimerization.

This sequence belongs to the protein kinase superfamily. As to quaternary structure, homodimer. Interacts with BCAR1 and CRK. Interacts with PRAG1. Interacts (when phosphorylated at Tyr-1188) with SHC1 (via PID domain). Found in a complex with PPP1CA, PPP1CC, SHC1 and PEAK1. Interacts (when phosphorylated at Tyr-635) with tensin TNS3 (when phosphorylated on the SH2 domain); TNS3 also interacts with integrins ITGB1, ITGB3 and ITGB5 and mediates their association with PEAK1. Interacts with RASAL2 and GRB2. In terms of processing, phosphorylated on tyrosine in a CSK-dependent manner in response to adhesion to fibronectin and to EGF stimulation. Phosphorylation at Tyr-665 by a Src family kinase controls subcellular localization to focal adhesion and focal adhesion dynamics. Phosphorylation at Tyr-1188 is essential for binding to SHC1. Phosphorylation at Tyr-635 promotes interaction with tensin TNS3.

The protein localises to the cytoplasm. Its subcellular location is the cytoskeleton. It localises to the cell junction. It is found in the focal adhesion. Probable catalytically inactive kinase. Scaffolding protein that regulates the cytoskeleton to control cell spreading and migration by modulating focal adhesion dynamics. Acts as a scaffold for mediating EGFR signaling. The sequence is that of Inactive tyrosine-protein kinase PEAK1 (PEAK1) from Homo sapiens (Human).